The sequence spans 306 residues: Isoaspartyl peptidase/L-asparaginase (306 aa).

T174 serves as the catalytic Nucleophile. Residues 202 to 205 (RIGD) and 224 to 227 (TGKG) each bind substrate.

Belongs to the Ntn-hydrolase family. As to quaternary structure, heterotetramer of two alpha and two beta chains arranged as a dimer of alpha/beta heterodimers. Post-translationally, cleaved into an alpha and beta chain by autocatalysis; this activates the enzyme. The N-terminal residue of the beta subunit is responsible for the nucleophile hydrolase activity. Developing seeds.

It carries out the reaction Cleavage of a beta-linked Asp residue from the N-terminus of a polypeptide.. Its function is as follows. Degrades proteins damaged by L-isoaspartyl residue formation (also known as beta-Asp residues). Also has L-asparaginase activity, which is used to liberate stored nitrogen during seed development. This is Isoaspartyl peptidase/L-asparaginase from Lupinus arboreus (Tree lupine).